We begin with the raw amino-acid sequence, 285 residues long: uncharacterized protein (285 aa).

This sequence belongs to the methyltransferase superfamily.

This is an uncharacterized protein from Mycobacterium tuberculosis (strain CDC 1551 / Oshkosh).